Here is a 65-residue protein sequence, read N- to C-terminus: Large ribosomal subunit protein bL35 (65 aa).

The protein belongs to the bacterial ribosomal protein bL35 family.

The sequence is that of Large ribosomal subunit protein bL35 from Acaryochloris marina (strain MBIC 11017).